Reading from the N-terminus, the 132-residue chain is Small ribosomal subunit protein uS11 (132 aa).

The protein belongs to the universal ribosomal protein uS11 family. In terms of assembly, part of the 30S ribosomal subunit. Interacts with proteins S7 and S18. Binds to IF-3.

Its function is as follows. Located on the platform of the 30S subunit, it bridges several disparate RNA helices of the 16S rRNA. Forms part of the Shine-Dalgarno cleft in the 70S ribosome. The protein is Small ribosomal subunit protein uS11 of Clostridium botulinum (strain 657 / Type Ba4).